Here is a 211-residue protein sequence, read N- to C-terminus: Scoloptoxin SSD43 (211 aa).

An N-terminal signal peptide occupies residues 1-20 (MNFVIYGVIVVLTSQLYVDG).

Post-translationally, contains 3 disulfide bonds. Expressed by the venom gland.

Its subcellular location is the secreted. In terms of biological role, shows trypsin inhibiting activity. The protein is highly thermally stable, since its incubation in boiling water during 10 minutes does not reduce its activity. The protein is Scoloptoxin SSD43 of Scolopendra dehaani (Thai centipede).